The chain runs to 812 residues: Valine--tRNA ligase (812 aa).

The 'HIGH' region signature appears at 46 to 56; the sequence is PTVSGQLHIGH. The 'KMSKS' region motif lies at 536-540; sequence KMSKS. Lys-539 lines the ATP pocket.

This sequence belongs to the class-I aminoacyl-tRNA synthetase family. ValS type 2 subfamily. Monomer.

The protein localises to the cytoplasm. The enzyme catalyses tRNA(Val) + L-valine + ATP = L-valyl-tRNA(Val) + AMP + diphosphate. Functionally, catalyzes the attachment of valine to tRNA(Val). As ValRS can inadvertently accommodate and process structurally similar amino acids such as threonine, to avoid such errors, it has a 'posttransfer' editing activity that hydrolyzes mischarged Thr-tRNA(Val) in a tRNA-dependent manner. The polypeptide is Valine--tRNA ligase (Rickettsia akari (strain Hartford)).